The chain runs to 126 residues: Fluoride-specific ion channel FluC (126 aa).

4 consecutive transmembrane segments (helical) span residues 1-21, 40-60, 72-92, and 104-124; these read MIVI…FGLD, LATL…GGFA, AISI…VATV, and MVNI…GLSL. 2 residues coordinate Na(+): glycine 79 and threonine 82.

This sequence belongs to the fluoride channel Fluc/FEX (TC 1.A.43) family.

It is found in the cell membrane. It catalyses the reaction fluoride(in) = fluoride(out). With respect to regulation, na(+) is not transported, but it plays an essential structural role and its presence is essential for fluoride channel function. Its function is as follows. Fluoride-specific ion channel. Important for reducing fluoride concentration in the cell, thus reducing its toxicity. The protein is Fluoride-specific ion channel FluC of Renibacterium salmoninarum (strain ATCC 33209 / DSM 20767 / JCM 11484 / NBRC 15589 / NCIMB 2235).